The following is a 565-amino-acid chain: Amino-acid acetyltransferase, mitochondrial (565 aa).

The interval 38–58 (DIATATPAATPSDGAQPPAQN) is disordered. Residues 352-540 (LPVRVLRSME…EFGGGRLVRV (189 aa)) form the N-acetyltransferase domain.

The protein belongs to the acetyltransferase family.

Its subcellular location is the mitochondrion. The catalysed reaction is L-glutamate + acetyl-CoA = N-acetyl-L-glutamate + CoA + H(+). It functions in the pathway amino-acid biosynthesis; L-arginine biosynthesis; N(2)-acetyl-L-ornithine from L-glutamate: step 1/4. In terms of biological role, N-acetylglutamate synthase involved in arginine biosynthesis. In Cryptococcus neoformans var. neoformans serotype D (strain B-3501A) (Filobasidiella neoformans), this protein is Amino-acid acetyltransferase, mitochondrial (ARG2).